The sequence spans 543 residues: Terpineol synthase, chloroplastic (543 aa).

The interval 1-22 is disordered; it reads MNTEPSPNHYSAISSSDQNLTR. The (2E)-geranyl diphosphate site is built by R263, D300, D304, R435, and N438. D300 and D304 together coordinate Mg(2+). The short motif at 300 to 304 is the DDXXD motif element; that stretch reads DDVYD. Residues N438, T442, and E446 each coordinate Mg(2+).

It belongs to the terpene synthase family. Tpsb subfamily. In terms of assembly, monomer. Requires Mg(2+) as cofactor. The cofactor is Mn(2+). As to expression, confined to flowers.

It is found in the plastid. It localises to the chloroplast. The enzyme catalyses (2E)-geranyl diphosphate + H2O = (S)-alpha-terpineol + diphosphate. The catalysed reaction is (2E)-geranyl diphosphate = sabinene + diphosphate. It catalyses the reaction (2E)-geranyl diphosphate = beta-myrcene + diphosphate. It carries out the reaction (2E)-geranyl diphosphate = limonene + diphosphate. The enzyme catalyses (2E)-geranyl diphosphate + H2O = 1,8-cineole + diphosphate. Its pathway is secondary metabolite biosynthesis; terpenoid biosynthesis. In terms of biological role, monoterpene synthase (TPS) involved in the biosynthesis of monoterpene natural products of the 'cineole cassette', volatile compounds present in floral scent. Catalyzes the conversion of (2E)-geranyl diphosphate (GPP) into alpha-terpineol and, as minor products, sabinene, beta-myrcene, limonene and 1,8-cineole. In Nicotiana alata (Winged tobacco), this protein is Terpineol synthase, chloroplastic.